A 106-amino-acid chain; its full sequence is Putative membrane protein insertion efficiency factor (106 aa).

It belongs to the UPF0161 family.

The protein resides in the cell inner membrane. In terms of biological role, could be involved in insertion of integral membrane proteins into the membrane. The polypeptide is Putative membrane protein insertion efficiency factor (Methylacidiphilum infernorum (isolate V4) (Methylokorus infernorum (strain V4))).